A 205-amino-acid polypeptide reads, in one-letter code: Large ribosomal subunit protein uL13 (205 aa).

This sequence belongs to the universal ribosomal protein uL13 family.

This is Large ribosomal subunit protein uL13 (RPL13A) from Lupinus luteus (European yellow lupine).